Here is a 171-residue protein sequence, read N- to C-terminus: 3-hydroxydecanoyl-[acyl-carrier-protein] dehydratase (171 aa).

His70 is a catalytic residue.

The protein belongs to the thioester dehydratase family. FabA subfamily. As to quaternary structure, homodimer.

The protein localises to the cytoplasm. It carries out the reaction a (3R)-hydroxyacyl-[ACP] = a (2E)-enoyl-[ACP] + H2O. The enzyme catalyses (3R)-hydroxydecanoyl-[ACP] = (2E)-decenoyl-[ACP] + H2O. It catalyses the reaction (2E)-decenoyl-[ACP] = (3Z)-decenoyl-[ACP]. The protein operates within lipid metabolism; fatty acid biosynthesis. In terms of biological role, necessary for the introduction of cis unsaturation into fatty acids. Catalyzes the dehydration of (3R)-3-hydroxydecanoyl-ACP to E-(2)-decenoyl-ACP and then its isomerization to Z-(3)-decenoyl-ACP. Can catalyze the dehydratase reaction for beta-hydroxyacyl-ACPs with saturated chain lengths up to 16:0, being most active on intermediate chain length. The sequence is that of 3-hydroxydecanoyl-[acyl-carrier-protein] dehydratase from Stenotrophomonas maltophilia (strain K279a).